Here is a 511-residue protein sequence, read N- to C-terminus: Cysteine--tRNA ligase 2, cytoplasmic (511 aa).

Cysteine 34 serves as a coordination point for Zn(2+). A 'HIGH' region motif is present at residues 36 to 46 (ITAYDFSHIGH). Zn(2+) is bound by residues cysteine 214, histidine 239, and glutamate 243. Residues 271-275 (KMAKS) carry the 'KMSKS' region motif. An ATP-binding site is contributed by lysine 274. 2 TPR repeats span residues 315–348 (ESSSEALYYVYQTLQDLDEGLSPYQDALSEDGGK) and 368–401 (SKMLDDLNTAHILTGAYQDALKFINASLSKLKKM).

Belongs to the class-I aminoacyl-tRNA synthetase family. It depends on Zn(2+) as a cofactor.

It localises to the cytoplasm. It is found in the cytosol. The catalysed reaction is tRNA(Cys) + L-cysteine + ATP = L-cysteinyl-tRNA(Cys) + AMP + diphosphate. The chain is Cysteine--tRNA ligase 2, cytoplasmic from Arabidopsis thaliana (Mouse-ear cress).